The primary structure comprises 344 residues: Interactor of constitutive active ROPs 1 (344 aa).

Disordered regions lie at residues 1-74 (MPRP…ESQL), 92-139 (EAVK…KETD), 186-218 (HESLGKENESLKNQLSDSASEISNVKANEDEMV), and 307-344 (FMDPPGMADDYDDGLGSGKRKSSGMKMFGELWRKKGQK). Positions 19 to 29 (SSSSTSDSNHS) are enriched in low complexity. Residues 60–108 (QKKLGGRISDLESQLGQAQEELRLLKEQLANAEAVKKQAQDELHKKSKK) are a coiled coil. Composition is skewed to basic and acidic residues over residues 93-103 (AVKKQAQDELH), 114-139 (RVEESATEAERIDRDEIPGDVQKETD), and 186-195 (HESLGKENES). The stretch at 145–273 (VEKIAVEEEE…EQWRKAADAA (129 aa)) forms a coiled coil. Polar residues predominate over residues 196–211 (LKNQLSDSASEISNVK).

Belongs to the ICR family. In terms of assembly, homooligomer. Interacts with ARAC3, ARAC4, ARAC8, ARAC11 and SEC3A, but not with ICR2 or EXO70A1. In terms of tissue distribution, expressed in mature and germinating pollen. Expressed throughout the embryo but not in the hypophysis and quiescent center (QC). In roots, absent from the QC and the stem cells.

It is found in the cell membrane. It localises to the nucleus. Its function is as follows. Acts as a scaffold, mediating interaction of ROPs with different proteins. Required for primary and adventitious root maintenance, but not for their formation. Promotes the stabilization of ARAC11 on the plasma membrane of the pollen tube initiation site but not the activation of ARAC11. Regulates directionality of polar auxin transport, and is required for the formation of a stable auxin maximum and tip localized auxin gradient during embryogenesis, organogenesis, and meristem activity. Involved in exocytosis and in the recycling of PIN proteins back to the plasma membrane. This Arabidopsis thaliana (Mouse-ear cress) protein is Interactor of constitutive active ROPs 1 (ICR1).